A 951-amino-acid polypeptide reads, in one-letter code: Valine--tRNA ligase (951 aa).

A 'HIGH' region motif is present at residues 42 to 52; sequence PNVTGSLHMGH. The short motif at 554–558 is the 'KMSKS' region element; sequence KMSKS. Lysine 557 lines the ATP pocket. A coiled-coil region spans residues 880–944; sequence AGLINKEDEL…AEAKAKLIEQ (65 aa).

This sequence belongs to the class-I aminoacyl-tRNA synthetase family. ValS type 1 subfamily. In terms of assembly, monomer.

Its subcellular location is the cytoplasm. The catalysed reaction is tRNA(Val) + L-valine + ATP = L-valyl-tRNA(Val) + AMP + diphosphate. In terms of biological role, catalyzes the attachment of valine to tRNA(Val). As ValRS can inadvertently accommodate and process structurally similar amino acids such as threonine, to avoid such errors, it has a 'posttransfer' editing activity that hydrolyzes mischarged Thr-tRNA(Val) in a tRNA-dependent manner. In Shigella dysenteriae serotype 1 (strain Sd197), this protein is Valine--tRNA ligase.